A 501-amino-acid polypeptide reads, in one-letter code: Glycogenin-2 (501 aa).

5 residues coordinate UDP: leucine 42, threonine 44, asparagine 45, tyrosine 48, and arginine 110. 14 residues coordinate UDP-alpha-D-glucose: leucine 42, threonine 44, asparagine 45, tyrosine 48, arginine 110, lysine 119, aspartate 135, alanine 136, aspartate 137, asparagine 166, serine 167, aspartate 193, aspartate 196, and glutamine 197. UDP contacts are provided by aspartate 135, alanine 136, and aspartate 137. Residue aspartate 135 coordinates Mn(2+). Residue aspartate 137 coordinates Mn(2+). Residue tyrosine 228 is glycosylated (O-linked (Glc...) tyrosine). UDP-binding residues include histidine 245, glycine 248, and lysine 251. Histidine 245 contacts Mn(2+). Glycine 248 and lysine 251 together coordinate UDP-alpha-D-glucose. Residues serine 368, serine 399, and serine 459 each carry the phosphoserine modification.

Homodimer, tightly complexed to glycogen synthase. Mn(2+) serves as cofactor. Post-translationally, self-glycosylated by the transfer of glucose residues from UDP-glucose to itself, forming an alpha-1,4-glycan of around 10 residues attached to Tyr-228. In terms of tissue distribution, detected in liver (at protein level). Expressed preferentially in liver, heart, and pancreas.

The protein localises to the cytoplasm. Its subcellular location is the nucleus. It catalyses the reaction L-tyrosyl-[glycogenin] + UDP-alpha-D-glucose = alpha-D-glucosyl-L-tyrosyl-[glycogenin] + UDP + H(+). It carries out the reaction [1,4-alpha-D-glucosyl](n)-L-tyrosyl-[glycogenin] + UDP-alpha-D-glucose = [1,4-alpha-D-glucosyl](n+1)-L-tyrosyl-[glycogenin] + UDP + H(+). It functions in the pathway glycan biosynthesis; glycogen biosynthesis. Glycogenin participates in the glycogen biosynthetic process along with glycogen synthase and glycogen branching enzyme. It catalyzes the formation of a short alpha (1,4)-glucosyl chain covalently attached via a glucose 1-O-tyrosyl linkage to internal tyrosine residues and these chains act as primers for the elongation reaction catalyzed by glycogen synthase. The polypeptide is Glycogenin-2 (GYG2) (Homo sapiens (Human)).